Reading from the N-terminus, the 78-residue chain is uncharacterized protein (78 aa).

2 consecutive transmembrane segments (helical) span residues 7 to 27 (ICLV…FFQF) and 41 to 61 (LSRI…GLLF).

Its subcellular location is the cell membrane. This is an uncharacterized protein from Bacillus subtilis (strain 168).